Consider the following 341-residue polypeptide: L-threonine 3-dehydrogenase (341 aa).

Position 38 (C38) interacts with Zn(2+). Active-site charge relay system residues include T40 and H43. 6 residues coordinate Zn(2+): H63, E64, C93, C96, C99, and C107. Residues I175, D195, R200, 262–264, and 286–287 contribute to the NAD(+) site; these read LGI and IY.

Belongs to the zinc-containing alcohol dehydrogenase family. As to quaternary structure, homotetramer. The cofactor is Zn(2+).

It is found in the cytoplasm. The catalysed reaction is L-threonine + NAD(+) = (2S)-2-amino-3-oxobutanoate + NADH + H(+). Its pathway is amino-acid degradation; L-threonine degradation via oxydo-reductase pathway; glycine from L-threonine: step 1/2. Catalyzes the NAD(+)-dependent oxidation of L-threonine to 2-amino-3-ketobutyrate. The sequence is that of L-threonine 3-dehydrogenase from Shewanella baltica (strain OS185).